A 183-amino-acid polypeptide reads, in one-letter code: Hypoxanthine/guanine phosphoribosyltransferase (183 aa).

It belongs to the purine/pyrimidine phosphoribosyltransferase family. Archaeal HPRT subfamily. In terms of assembly, homodimer.

The protein localises to the cytoplasm. The enzyme catalyses IMP + diphosphate = hypoxanthine + 5-phospho-alpha-D-ribose 1-diphosphate. The catalysed reaction is GMP + diphosphate = guanine + 5-phospho-alpha-D-ribose 1-diphosphate. It participates in purine metabolism; IMP biosynthesis via salvage pathway; IMP from hypoxanthine: step 1/1. Its function is as follows. Catalyzes a salvage reaction resulting in the formation of IMP that is energically less costly than de novo synthesis. The polypeptide is Hypoxanthine/guanine phosphoribosyltransferase (Methanotorris igneus (strain DSM 5666 / JCM 11834 / Kol 5)).